The following is a 145-amino-acid chain: D-aminoacyl-tRNA deacylase (145 aa).

The Gly-cisPro motif, important for rejection of L-amino acids signature appears at 137–138; sequence GP.

This sequence belongs to the DTD family. As to quaternary structure, homodimer.

It localises to the cytoplasm. The catalysed reaction is glycyl-tRNA(Ala) + H2O = tRNA(Ala) + glycine + H(+). The enzyme catalyses a D-aminoacyl-tRNA + H2O = a tRNA + a D-alpha-amino acid + H(+). Functionally, an aminoacyl-tRNA editing enzyme that deacylates mischarged D-aminoacyl-tRNAs. Also deacylates mischarged glycyl-tRNA(Ala), protecting cells against glycine mischarging by AlaRS. Acts via tRNA-based rather than protein-based catalysis; rejects L-amino acids rather than detecting D-amino acids in the active site. By recycling D-aminoacyl-tRNA to D-amino acids and free tRNA molecules, this enzyme counteracts the toxicity associated with the formation of D-aminoacyl-tRNA entities in vivo and helps enforce protein L-homochirality. This is D-aminoacyl-tRNA deacylase from Pseudomonas savastanoi pv. phaseolicola (strain 1448A / Race 6) (Pseudomonas syringae pv. phaseolicola (strain 1448A / Race 6)).